Here is a 277-residue protein sequence, read N- to C-terminus: uncharacterized protein (277 aa).

The signal sequence occupies residues 1–25; sequence MNKKSIWSKTAFGSLFLLLGTAFTA. Cys26 carries N-palmitoyl cysteine lipidation. Cys26 carries S-diacylglycerol cysteine lipidation.

It belongs to the MG439/MG440 family.

The protein resides in the cell membrane. This is an uncharacterized protein from Mycoplasma pneumoniae (strain ATCC 29342 / M129 / Subtype 1) (Mycoplasmoides pneumoniae).